Reading from the N-terminus, the 121-residue chain is uncharacterized protein (121 aa).

Residues 9–29 form a helical membrane-spanning segment; that stretch reads LTILIASIYIIFFVNAAPTLY. The interval 91–121 is disordered; the sequence is EELPTYPPTMTTPLETTPLDTSPPVLPSAIP. The segment covering 98-113 has biased composition (low complexity); sequence PTMTTPLETTPLDTSP.

It localises to the host membrane. This is an uncharacterized protein from Alcelaphine herpesvirus 1 (strain C500) (AlHV-1).